The chain runs to 772 residues: Ion-translocating oxidoreductase complex subunit C (772 aa).

2 consecutive 4Fe-4S ferredoxin-type domains span residues 369 to 397 (GEPQ…QQLY) and 407 to 436 (KATT…VQYF). [4Fe-4S] cluster-binding residues include Cys-377, Cys-380, Cys-383, Cys-387, Cys-416, Cys-419, Cys-422, and Cys-426. Positions 599–748 (KARKLEQQQA…EPEEQVDPRK (150 aa)) are disordered.

It belongs to the 4Fe4S bacterial-type ferredoxin family. RnfC subfamily. In terms of assembly, the complex is composed of six subunits: RsxA, RsxB, RsxC, RsxD, RsxE and RsxG. Requires [4Fe-4S] cluster as cofactor.

The protein localises to the cell inner membrane. Part of a membrane-bound complex that couples electron transfer with translocation of ions across the membrane. Required to maintain the reduced state of SoxR. The protein is Ion-translocating oxidoreductase complex subunit C of Shigella dysenteriae serotype 1 (strain Sd197).